The sequence spans 155 residues: Small ribosomal subunit protein uS7 (155 aa).

It belongs to the universal ribosomal protein uS7 family. Part of the 30S ribosomal subunit. Contacts proteins S9 and S11.

Its function is as follows. One of the primary rRNA binding proteins, it binds directly to 16S rRNA where it nucleates assembly of the head domain of the 30S subunit. Is located at the subunit interface close to the decoding center, probably blocks exit of the E-site tRNA. In Xylella fastidiosa (strain M23), this protein is Small ribosomal subunit protein uS7.